Reading from the N-terminus, the 250-residue chain is uncharacterized protein (250 aa).

Residues H165 to L208 are a coiled coil. Residues T201–M233 are compositionally biased toward basic and acidic residues. The interval T201–P250 is disordered.

This is an uncharacterized protein from Treponema pallidum (strain Nichols).